The following is a 531-amino-acid chain: MKITGSNLSIYDVADVCMKRATVELDPSQLERVAVAHERTQAWGEAQHPIYGVNTGFGELVPVMIPRQHKRELQENLIRSHAAGGGEPFADDVVRAIMLARLNCLMKGYSGASVETVKLLAEFINRGIHPVIPQQGSLGASGDLSPLSHIALALIGEGTVSFKGQVRKTGDVLREEGLKPLELGFKGGLTLINGTSAMTGAACVALGRAYHLFRLALLATADFVQCLGGSTGPFEERGHLPKNHSGQVIVAREIRKLLAGSQLTSDHQDLMKEMVARSGVGNDVVDTGVYLQDAYTLRAVPQILGPVLDTLDFARKLIEEELNSTNDNPLIFDVPEQTFHGANFHGQYVAMACDYLNIAVTEIGVLAERQLNRLVDPNINGKLPPFLASAHSGLLCGFEGGQYLATSIASENLDLAAPSSIKSLPSNGSNQDVVSMGTTSARKSLRLCENVGTIVSTLIAACNQAGHILGNERFSPPIRELHGELSRSVPLYQDDSPIFELFQTVRAFVGGDGFRAHLVTHLDLAATTASS.

The active-site Proton donor/acceptor is Tyr-51. His-81 provides a ligand contact to substrate. The segment at residues Ala-140–Gly-142 is a cross-link (5-imidazolinone (Ala-Gly)). A 2,3-didehydroalanine (Ser) modification is found at Ser-141. Substrate is bound by residues Asn-193 and Arg-298.

It belongs to the TAL/TAM family. Homotetramer; dimer of dimers. Contains an active site 4-methylidene-imidazol-5-one (MIO), which is formed autocatalytically by cyclization and dehydration of residues Ala-Ser-Gly.

It catalyses the reaction L-tyrosine = 3-amino-3-(4-hydroxyphenyl)propanoate. It carries out the reaction L-tyrosine = (E)-4-coumarate + NH4(+). Its function is as follows. Has aminomutase and, to a lesser extent, ammonia-lyase activity. Primarily, catalyzes the rearrangement of L-tyrosine to R-beta-tyrosine, which is incorporated into secondary metabolites called chondramides. The aminomutase activity mainly produces R-beta-tyrosine but also S-beta tyrosine in smaller amounts. Does not accept D-tyrosine, L-histidine or L-phenylalanine as substrates. This Chondromyces crocatus protein is Tyrosine 2,3-aminomutase.